The sequence spans 252 residues: Ribosomal RNA small subunit methyltransferase J (252 aa).

S-adenosyl-L-methionine is bound by residues 101–102 (RD), 117–118 (ER), 153–154 (SS), and Asp171.

The protein belongs to the methyltransferase superfamily. RsmJ family.

The protein resides in the cytoplasm. The catalysed reaction is guanosine(1516) in 16S rRNA + S-adenosyl-L-methionine = N(2)-methylguanosine(1516) in 16S rRNA + S-adenosyl-L-homocysteine + H(+). Its function is as follows. Specifically methylates the guanosine in position 1516 of 16S rRNA. In Salmonella choleraesuis (strain SC-B67), this protein is Ribosomal RNA small subunit methyltransferase J.